The following is a 72-amino-acid chain: Protein kish-A (72 aa).

Positions 1–26 (MSAIFNFQSLLTVILLLICTCAYIRS) are cleaved as a signal peptide. Residues 27-53 (LAPSILDRNKTGLLGIFWKCARIGERK) lie on the Extracellular side of the membrane. N-linked (GlcNAc...) asparagine glycosylation is present at Asn-35. The helical transmembrane segment at 54-71 (SPYVAICCIVMAFSILFI) threads the bilayer. A topological domain (cytoplasmic) is located at residue Gln-72.

This sequence belongs to the KISH family.

It localises to the golgi apparatus membrane. Functionally, involved in the early part of the secretory pathway. In Mus musculus (Mouse), this protein is Protein kish-A (Tmem167a).